The sequence spans 101 residues: NAD(P)H-quinone oxidoreductase subunit 4L, chloroplastic (101 aa).

3 helical membrane-spanning segments follow: residues 2–22 (MLEHVLVLSAYLFSIGIYGLI), 32–52 (MCLELILNAVNMNLVTFSDLF), and 61–81 (IFSIFVIAIAAAEAAIGPAIV).

This sequence belongs to the complex I subunit 4L family. NDH is composed of at least 16 different subunits, 5 of which are encoded in the nucleus.

Its subcellular location is the plastid. It is found in the chloroplast thylakoid membrane. It catalyses the reaction a plastoquinone + NADH + (n+1) H(+)(in) = a plastoquinol + NAD(+) + n H(+)(out). The enzyme catalyses a plastoquinone + NADPH + (n+1) H(+)(in) = a plastoquinol + NADP(+) + n H(+)(out). Its function is as follows. NDH shuttles electrons from NAD(P)H:plastoquinone, via FMN and iron-sulfur (Fe-S) centers, to quinones in the photosynthetic chain and possibly in a chloroplast respiratory chain. The immediate electron acceptor for the enzyme in this species is believed to be plastoquinone. Couples the redox reaction to proton translocation, and thus conserves the redox energy in a proton gradient. The chain is NAD(P)H-quinone oxidoreductase subunit 4L, chloroplastic from Nymphaea alba (White water-lily).